The sequence spans 353 residues: Holliday junction branch migration complex subunit RuvB (353 aa).

The tract at residues 1 to 182 (MPERLITPKG…FGIVQRLEFY (182 aa)) is large ATPase domain (RuvB-L). Residues Ile21, Arg22, Gly63, Lys66, Thr67, Thr68, 129–131 (EDF), Arg172, Tyr182, and Arg219 each bind ATP. Position 67 (Thr67) interacts with Mg(2+). The tract at residues 183–253 (NVQDLTRIVQ…VADRALDLLD (71 aa)) is small ATPAse domain (RuvB-S). Residues 256-353 (VQGFDAQDRR…QEEGGGEGKL (98 aa)) form a head domain (RuvB-H) region. Arg292, Arg311, and Arg316 together coordinate DNA.

This sequence belongs to the RuvB family. Homohexamer. Forms an RuvA(8)-RuvB(12)-Holliday junction (HJ) complex. HJ DNA is sandwiched between 2 RuvA tetramers; dsDNA enters through RuvA and exits via RuvB. An RuvB hexamer assembles on each DNA strand where it exits the tetramer. Each RuvB hexamer is contacted by two RuvA subunits (via domain III) on 2 adjacent RuvB subunits; this complex drives branch migration. In the full resolvosome a probable DNA-RuvA(4)-RuvB(12)-RuvC(2) complex forms which resolves the HJ.

The protein resides in the cytoplasm. It carries out the reaction ATP + H2O = ADP + phosphate + H(+). Its function is as follows. The RuvA-RuvB-RuvC complex processes Holliday junction (HJ) DNA during genetic recombination and DNA repair, while the RuvA-RuvB complex plays an important role in the rescue of blocked DNA replication forks via replication fork reversal (RFR). RuvA specifically binds to HJ cruciform DNA, conferring on it an open structure. The RuvB hexamer acts as an ATP-dependent pump, pulling dsDNA into and through the RuvAB complex. RuvB forms 2 homohexamers on either side of HJ DNA bound by 1 or 2 RuvA tetramers; 4 subunits per hexamer contact DNA at a time. Coordinated motions by a converter formed by DNA-disengaged RuvB subunits stimulates ATP hydrolysis and nucleotide exchange. Immobilization of the converter enables RuvB to convert the ATP-contained energy into a lever motion, pulling 2 nucleotides of DNA out of the RuvA tetramer per ATP hydrolyzed, thus driving DNA branch migration. The RuvB motors rotate together with the DNA substrate, which together with the progressing nucleotide cycle form the mechanistic basis for DNA recombination by continuous HJ branch migration. Branch migration allows RuvC to scan DNA until it finds its consensus sequence, where it cleaves and resolves cruciform DNA. The protein is Holliday junction branch migration complex subunit RuvB of Thioalkalivibrio sulfidiphilus (strain HL-EbGR7).